The primary structure comprises 266 residues: Acetyl esterase (266 aa).

This chain is Acetyl esterase (xynC), found in Caldicellulosiruptor saccharolyticus (Caldocellum saccharolyticum).